We begin with the raw amino-acid sequence, 242 residues long: Leucyl/phenylalanyl-tRNA--protein transferase (242 aa).

The protein belongs to the L/F-transferase family.

It is found in the cytoplasm. It catalyses the reaction N-terminal L-lysyl-[protein] + L-leucyl-tRNA(Leu) = N-terminal L-leucyl-L-lysyl-[protein] + tRNA(Leu) + H(+). It carries out the reaction N-terminal L-arginyl-[protein] + L-leucyl-tRNA(Leu) = N-terminal L-leucyl-L-arginyl-[protein] + tRNA(Leu) + H(+). The enzyme catalyses L-phenylalanyl-tRNA(Phe) + an N-terminal L-alpha-aminoacyl-[protein] = an N-terminal L-phenylalanyl-L-alpha-aminoacyl-[protein] + tRNA(Phe). Functions in the N-end rule pathway of protein degradation where it conjugates Leu, Phe and, less efficiently, Met from aminoacyl-tRNAs to the N-termini of proteins containing an N-terminal arginine or lysine. This Alcanivorax borkumensis (strain ATCC 700651 / DSM 11573 / NCIMB 13689 / SK2) protein is Leucyl/phenylalanyl-tRNA--protein transferase.